The chain runs to 282 residues: BTB/POZ domain-containing protein At3g56230 (282 aa).

The segment covering Gly-40–Asn-50 has biased composition (basic and acidic residues). A disordered region spans residues Gly-40–Leu-66. Over residues His-51–Ser-64 the composition is skewed to low complexity. The 71-residue stretch at Ala-111–Lys-181 folds into the BTB domain.

Its pathway is protein modification; protein ubiquitination. In terms of biological role, may act as a substrate-specific adapter of an E3 ubiquitin-protein ligase complex (CUL3-RBX1-BTB) which mediates the ubiquitination and subsequent proteasomal degradation of target proteins. This Arabidopsis thaliana (Mouse-ear cress) protein is BTB/POZ domain-containing protein At3g56230.